The following is a 419-amino-acid chain: MSSIEQIMLTLGENARQASRAMMRASGTAKNRALLAMAELIIDGKAALQAANALDLEAARANGLEPALLDRLTLSDRSVQLMAEGLRQIAALPDPVGSLGPTQVRPNGMRVAQMRVPLGVIGIIYESRPNVTIDAAALCLKSGNATILRGGSEALHSNLALGAIVQAGLAAAELPPAAVQVVSTTDRAAVGKLVTMTEHIDVIVPRGGKGLIARLAQEARVPLIKHLDGNCHVYIDAAADPDRALEIAFNAKTYRYGVCGSMETLLVHRAIAPTQLPRIARALIEHGVELRGCERSQAIVPGMAAASEEDWGTEYLGPVLAVRVVDDLDQAMEHIARWGSGHTDAIVTENLAAAQRFQREVDSSSVYVNLPTVFADGFEYGLGAEIGISTNRLHARGPVGLEGLTTYKWVLTGEGQTRG.

This sequence belongs to the gamma-glutamyl phosphate reductase family.

The protein resides in the cytoplasm. It catalyses the reaction L-glutamate 5-semialdehyde + phosphate + NADP(+) = L-glutamyl 5-phosphate + NADPH + H(+). It participates in amino-acid biosynthesis; L-proline biosynthesis; L-glutamate 5-semialdehyde from L-glutamate: step 2/2. Functionally, catalyzes the NADPH-dependent reduction of L-glutamate 5-phosphate into L-glutamate 5-semialdehyde and phosphate. The product spontaneously undergoes cyclization to form 1-pyrroline-5-carboxylate. The chain is Gamma-glutamyl phosphate reductase from Bordetella avium (strain 197N).